The following is a 704-amino-acid chain: Low calcium response locus protein D (704 aa).

Transmembrane regions (helical) follow at residues 18 to 35 (IMLA…VLPL), 42 to 61 (ILIA…AIYI), 108 to 132 (FVVG…FLVI), 200 to 220 (AIAG…IGVT), 235 to 259 (ILTV…GIIV), 278 to 297 (VVAQ…LFGL), and 304 to 320 (VTFL…GYML).

It belongs to the FHIPEP (flagella/HR/invasion proteins export pore) family.

Its subcellular location is the cell inner membrane. Functionally, could be involved in the secretion of the yop virulence proteins. This is Low calcium response locus protein D (lcrD) from Yersinia pestis.